The following is a 115-amino-acid chain: Large ribosomal subunit protein bL19 (115 aa).

Belongs to the bacterial ribosomal protein bL19 family.

Functionally, this protein is located at the 30S-50S ribosomal subunit interface and may play a role in the structure and function of the aminoacyl-tRNA binding site. This is Large ribosomal subunit protein bL19 from Klebsiella pneumoniae (strain 342).